The following is a 321-amino-acid chain: Anthranilate phosphoribosyltransferase (321 aa).

5-phospho-alpha-D-ribose 1-diphosphate is bound by residues glycine 72, 75-76 (GD), threonine 80, 82-85 (NVST), 99-107 (KHGNVSITS), and serine 111. Residue glycine 72 participates in anthranilate binding. A Mg(2+)-binding site is contributed by serine 84. Residue asparagine 102 coordinates anthranilate. Arginine 157 contacts anthranilate. Residues aspartate 216 and glutamate 217 each coordinate Mg(2+).

It belongs to the anthranilate phosphoribosyltransferase family. As to quaternary structure, homodimer. It depends on Mg(2+) as a cofactor.

The catalysed reaction is N-(5-phospho-beta-D-ribosyl)anthranilate + diphosphate = 5-phospho-alpha-D-ribose 1-diphosphate + anthranilate. It functions in the pathway amino-acid biosynthesis; L-tryptophan biosynthesis; L-tryptophan from chorismate: step 2/5. In terms of biological role, catalyzes the transfer of the phosphoribosyl group of 5-phosphorylribose-1-pyrophosphate (PRPP) to anthranilate to yield N-(5'-phosphoribosyl)-anthranilate (PRA). The chain is Anthranilate phosphoribosyltransferase from Methanococcus maripaludis (strain DSM 14266 / JCM 13030 / NBRC 101832 / S2 / LL).